The sequence spans 623 residues: Actin-related protein 8 (623 aa).

The span at 1–24 shows a compositional bias: basic and acidic residues; it reads MTQTDRDAENGRDREKDREKEQQR. Positions 1–29 are disordered; that stretch reads MTQTDRDAENGRDREKDREKEQQRGVKRP. 283–286 contributes to the ATP binding site; it reads DVGD. Over residues 428–438 the composition is skewed to low complexity; the sequence is TQSKQDQSSKA. Positions 428–458 are disordered; it reads TQSKQDQSSKASADRKSFPKPSSFEGESSVC.

It belongs to the actin family. ARP8 subfamily. As to quaternary structure, component of the chromatin remodeling INO80 complex; specifically part of a complex module associated with the DBINO domain of INO80. Exists as monomers and dimers, but the dimer is most probably the biologically relevant form required for stable interactions with histones that exploits the twofold symmetry of the nucleosome core.

It localises to the nucleus. It is found in the chromosome. Plays an important role in the functional organization of mitotic chromosomes. Exhibits low basal ATPase activity, and unable to polymerize. In terms of biological role, proposed core component of the chromatin remodeling INO80 complex which is involved in transcriptional regulation, DNA replication and probably DNA repair. Required for the recruitment of INO80 (and probably the INO80 complex) to sites of DNA damage Strongly prefer nucleosomes and H3-H4 tetramers over H2A-H2B dimers, suggesting it may act as a nucleosome recognition module within the complex. The chain is Actin-related protein 8 (actr8) from Danio rerio (Zebrafish).